The following is a 93-amino-acid chain: Small ribosomal subunit protein uS19m (93 aa).

This sequence belongs to the universal ribosomal protein uS19 family. Component of the mitochondrial small ribosomal subunit (mt-SSU). Mature yeast 74S mitochondrial ribosomes consist of a small (37S) and a large (54S) subunit. The 37S small subunit contains a 15S ribosomal RNA (15S mt-rRNA) and at least 32 different proteins. The 54S large subunit contains a 21S rRNA (21S mt-rRNA) and at least 45 different proteins.

Its subcellular location is the mitochondrion. Component of the mitochondrial ribosome (mitoribosome), a dedicated translation machinery responsible for the synthesis of mitochondrial genome-encoded proteins, including at least some of the essential transmembrane subunits of the mitochondrial respiratory chain. The mitoribosomes are attached to the mitochondrial inner membrane and translation products are cotranslationally integrated into the membrane. The chain is Small ribosomal subunit protein uS19m (rsm19) from Schizosaccharomyces pombe (strain 972 / ATCC 24843) (Fission yeast).